A 94-amino-acid polypeptide reads, in one-letter code: Neutrophil defensin 1 (94 aa).

Residues 1-19 (MRTLAILAAILLVALQAQA) form the signal peptide. Residues 20-38 (EPLQARADEVAAAPEQIAA) constitute a propeptide that is removed on maturation. Cystine bridges form between Cys-66-Cys-94, Cys-68-Cys-83, and Cys-73-Cys-93. Arg-78 carries the post-translational modification ADP-ribosylarginine; by ART1. At Tyr-85 the chain carries Phosphotyrosine. The residue at position 88 (Arg-88) is an ADP-ribosylarginine; by ART1.

The protein belongs to the alpha-defensin family. Tetramer. Dimer. Interacts with RETN. In terms of assembly, (Microbial infection) Interacts with HIV-1 surface protein gp120. As to quaternary structure, (Microbial infection) Interacts with herpes virus 1 (HHV1) envelope glycoprotein B; this interaction inhibits viral infection. In terms of processing, ADP-ribosylation drastically reduces cytotoxic and antibacterial activities, and enhances IL8 production. Phosphorylation at Tyr-85 has been found in some cancer cell lines, and interferes with ADP-ribosylation.

It is found in the secreted. In terms of biological role, effector molecule of the innate immune system that acts via antibiotic-like properties against a broad array of infectious agents including bacteria, fungi, and viruses or by promoting the activation and maturation of some APCs. Interacts with the essential precursor of cell wall synthesis lipid II to inhibit bacterial cell wall synthesis. Inhibits adenovirus infection via inhibition of viral disassembly at the vertex region, thereby restricting the release of internal capsid protein pVI, which is required for endosomal membrane penetration during cell entry. In addition, interaction with adenovirus capsid leads to the redirection of viral particles to TLR4 thereby promoting a NLRP3-mediated inflammasome response and interleukin 1-beta (IL-1beta) release. Induces the production of proinflammatory cytokines including type I interferon (IFN) in plasmacytoid dendritic cells (pDCs) by triggering the degradation of NFKBIA and nuclear translocation of IRF1, both of which are required for activation of pDCs. In Homo sapiens (Human), this protein is Neutrophil defensin 1 (DEFA1).